The chain runs to 152 residues: Succinate dehydrogenase [ubiquinone] cytochrome b small subunit B, mitochondrial (152 aa).

Residues M1–S21 constitute a mitochondrion transit peptide. The Mitochondrial matrix portion of the chain corresponds to L22–S56. The helical transmembrane segment at M57 to L78 threads the bilayer. Over Y79–A83 the chain is Mitochondrial intermembrane. The chain crosses the membrane as a helical span at residues M84–V104. Residue H95 coordinates heme b. The Mitochondrial matrix portion of the chain corresponds to T105–K113. Y107 contributes to the a ubiquinone binding site. Residues I114–F135 traverse the membrane as a helical segment. Over N136–L152 the chain is Mitochondrial intermembrane.

Belongs to the CybS family. In terms of assembly, component of complex II composed of four subunits: the flavoprotein (FP) SDHA, iron-sulfur protein (IP) SDHB, and a cytochrome b560 composed of SDHC and SDHD.

It localises to the mitochondrion inner membrane. The protein operates within carbohydrate metabolism; tricarboxylic acid cycle. Functionally, membrane-anchoring subunit of succinate dehydrogenase (SDH) that is involved in complex II of the mitochondrial electron transport chain and is responsible for transferring electrons from succinate to ubiquinone (coenzyme Q). SDH also oxidizes malate to the non-canonical enol form of oxaloacetate, enol-oxaloacetate. Enol-oxaloacetate, which is a potent inhibitor of the succinate dehydrogenase activity, is further isomerized into keto-oxaloacetate. The sequence is that of Succinate dehydrogenase [ubiquinone] cytochrome b small subunit B, mitochondrial (sdhd-b) from Xenopus laevis (African clawed frog).